A 967-amino-acid polypeptide reads, in one-letter code: Vitamin B12-dependent ribonucleotide reductase (967 aa).

The interval 1–23 (MTETASGPARSSRAKGTKAGKGL) is disordered. Substrate is bound by residues Ser143, 159-160 (AC), Gly188, 364-368 (NPCSE), and 554-558 (PTGTI). Cysteines 160 and 377 form a disulfide. The active-site Proton acceptor is Asn364. Cys366 serves as the catalytic Cysteine radical intermediate. Glu368 (proton acceptor) is an active-site residue.

This sequence belongs to the ribonucleoside diphosphate reductase class-2 family. Requires adenosylcob(III)alamin as cofactor.

The catalysed reaction is a 2'-deoxyribonucleoside 5'-diphosphate + [thioredoxin]-disulfide + H2O = a ribonucleoside 5'-diphosphate + [thioredoxin]-dithiol. In terms of biological role, catalyzes the reduction of ribonucleotides to deoxyribonucleotides. May function to provide a pool of deoxyribonucleotide precursors for DNA repair during oxygen limitation and/or for immediate growth after restoration of oxygen. This Streptomyces coelicolor (strain ATCC BAA-471 / A3(2) / M145) protein is Vitamin B12-dependent ribonucleotide reductase (nrdJ).